Reading from the N-terminus, the 464-residue chain is GTPase Der (464 aa).

EngA-type G domains follow at residues 3 to 166 and 178 to 351; these read PVIA…PEVE and IRIA…DSAF. Residues 9-16, 56-60, 118-121, 184-191, 231-235, and 296-299 each bind GTP; these read GRPNVGKS, DTGGL, NKTD, GRPNAGKS, DTAGV, and NKWD. In terms of domain architecture, KH-like spans 352 to 436; sequence IKVSTNHLTK…PIRLEFKTGE (85 aa).

Belongs to the TRAFAC class TrmE-Era-EngA-EngB-Septin-like GTPase superfamily. EngA (Der) GTPase family. Associates with the 50S ribosomal subunit.

GTPase that plays an essential role in the late steps of ribosome biogenesis. This is GTPase Der from Thioalkalivibrio sulfidiphilus (strain HL-EbGR7).